A 426-amino-acid polypeptide reads, in one-letter code: MSKSENLYSAARELIPGGVNSPVRAFTGVGGTPLFIERADGAFLYDVDGKAYIDYVGSWGPMVLGHNHPTIRNAVIEAAQRGLSFGAPTEMEVKMAELVTELVPTMDMVRMVNSGTEATMSAIRLARGFTGRDKIIKFEGCYHGHADCLLVKAGSGALTLGQPNSPGVPADFAKHTLTCTYNDLDTVRAAFEQYPQEVACIIVEPVAGNMNCIPPQPDFLPGLRALCDEFGALLIIDEVMTGFRVALAGAQSYYDVVPDLTCLGKIIGGGMPVGAFGGRKDVMEALAPTGPVYQAGTLSGNPIAMAAGFACLTEVAQPGIHETLTDLTAQLANGLLEAAEETGVPLVVNHVGGMFGIFFTDAKTVTCYQDVVKCDVERFKRFFHLMLEEGVYLAPSAFEAGFMSVAHSVEDINKTIDAARKVFAKL.

The residue at position 265 (lysine 265) is an N6-(pyridoxal phosphate)lysine.

It belongs to the class-III pyridoxal-phosphate-dependent aminotransferase family. HemL subfamily. As to quaternary structure, homodimer. Pyridoxal 5'-phosphate serves as cofactor.

It localises to the cytoplasm. It carries out the reaction (S)-4-amino-5-oxopentanoate = 5-aminolevulinate. It functions in the pathway porphyrin-containing compound metabolism; protoporphyrin-IX biosynthesis; 5-aminolevulinate from L-glutamyl-tRNA(Glu): step 2/2. The polypeptide is Glutamate-1-semialdehyde 2,1-aminomutase (Enterobacter sp. (strain 638)).